The sequence spans 492 residues: Probable malate:quinone oxidoreductase 1 (492 aa).

Belongs to the MQO family. The cofactor is FAD.

It catalyses the reaction (S)-malate + a quinone = a quinol + oxaloacetate. Its pathway is carbohydrate metabolism; tricarboxylic acid cycle; oxaloacetate from (S)-malate (quinone route): step 1/1. The protein is Probable malate:quinone oxidoreductase 1 of Staphylococcus epidermidis (strain ATCC 12228 / FDA PCI 1200).